The sequence spans 443 residues: Xaa-Pro dipeptidase (443 aa).

Mn(2+) is bound by residues D246, D257, H339, E384, and E423.

The protein belongs to the peptidase M24B family. Bacterial-type prolidase subfamily. It depends on Mn(2+) as a cofactor.

The enzyme catalyses Xaa-L-Pro dipeptide + H2O = an L-alpha-amino acid + L-proline. Functionally, splits dipeptides with a prolyl residue in the C-terminal position. This Enterobacter sp. (strain 638) protein is Xaa-Pro dipeptidase.